A 291-amino-acid chain; its full sequence is Insulin-like growth factor-binding protein 3 (291 aa).

A signal peptide spans 1 to 27 (MQRARPTLWAAALTLLVLLRGPPVARA). The interval 28-134 (GASSAGLGPV…AYLLPAPPAP (107 aa)) is IGF-binding. In terms of domain architecture, IGFBP N-terminal spans 36 to 117 (PVVRCEPCDA…LDGRGLCVNA (82 aa)). Intrachain disulfides connect Cys40–Cys67, Cys43–Cys69, Cys51–Cys70, Cys58–Cys73, Cys81–Cys94, and Cys88–Cys114. N-linked (GlcNAc...) (complex) asparagine glycans are attached at residues Asn116 and Asn136. 2 disordered regions span residues 130–162 (APPAPGNASESEEDRSAGSVESPSVSSTHRVSD) and 189–211 (DYESQSTDTQNFSSESKRETEYG). Residues 146–156 (AGSVESPSVSS) are compositionally biased toward low complexity. Residue Ser148 is modified to Phosphoserine; by FAM20C. Residues 191-202 (ESQSTDTQNFSS) are compositionally biased toward polar residues. The residue at position 194 (Ser194) is a Phosphoserine; by CK2. N-linked (GlcNAc...) (complex) asparagine glycosylation is present at Asn199. Ser201 carries the phosphoserine; by FAM20C modification. Residue Ser202 is modified to Phosphoserine; by CK2. Positions 210-285 (YGPCRREMED…TTKGKEDVHC (76 aa)) constitute a Thyroglobulin type-1 domain. Cystine bridges form between Cys213–Cys240, Cys251–Cys262, and Cys264–Cys285.

As to quaternary structure, interacts with XLKD1. Binds IGF2 more than IGF1. Forms a ternary complex of about 140 to 150 kDa with IGF1 or IGF2 and a 85 kDa glycoprotein (ALS). Interacts with humanin; humanin competes with importin KPNB1 for binding to IGFBP3, blocking IGFBP3 nuclear import and IGFBP3-mediated apoptosis. Interacts with TMEM219. Interacts with RXRA; this interaction modulates the transcriptional activity of RXRA. Interacts with LRP1; this interaction mediates cell growth inhibition independent of IGF1. Post-translationally, phosphorylated by FAM20C in the extracellular medium. Phosphorylated by CK2; resulting in decreased nuclear localization. Expressed by most tissues. Present in plasma.

The protein localises to the secreted. It is found in the nucleus. Multifunctional protein that plays a critical role in regulating the availability of IGFs such as IGF1 and IGF2 to their receptors and thereby regulates IGF-mediated cellular processes including proliferation, differentiation, and apoptosis in a cell-type specific manner. Also exhibits IGF-independent antiproliferative and apoptotic effects mediated by its receptor TMEM219/IGFBP-3R. Inhibits the positive effect of humanin on insulin sensitivity. Promotes testicular germ cell apoptosis. Acts via LRP-1/alpha2M receptor, also known as TGF-beta type V receptor, to mediate cell growth inhibition independent of IGF1. Mechanistically, induces serine-specific dephosphorylation of IRS1 or IRS2 upon ligation to its receptor, leading to the inhibitory cascade. In the nucleus, interacts with transcription factors such as retinoid X receptor-alpha/RXRA to regulate transcriptional signaling and apoptosis. This is Insulin-like growth factor-binding protein 3 (IGFBP3) from Homo sapiens (Human).